The sequence spans 400 residues: Coiled-coil domain-containing glutamate-rich protein 1 (400 aa).

Positions 1-11 (MTQTVNEREDP) are enriched in basic and acidic residues. Disordered regions lie at residues 1-68 (MTQT…IPGP), 134-164 (RPPG…PPID), and 203-353 (QEKL…DKFL). Positions 31-45 (YHRRQRGAPMSKRRY) are enriched in basic residues. The segment covering 46-57 (RDGPKTEYEAPR) has biased composition (basic and acidic residues). The span at 137–157 (GRKKRWGRRGRGLRRHPRRSF) shows a compositional bias: basic residues. A compositionally biased stretch (low complexity) spans 209–220 (QQAALRAHQAQA). Polar residues predominate over residues 255–271 (PSLTFSPAPGQQNQSPT). A compositionally biased stretch (acidic residues) spans 275–347 (VEEEEKNVDD…EAGLEEGEQR (73 aa)). Residues 299-335 (EEEEVDGESEDEDVDEEEVEEAGNGEEREEDQEEEDV) are a coiled coil.

The protein resides in the nucleus. Its function is as follows. Regulator of histone epigenetic modifications and chromatin compaction into the sperm head, required for histone-to-protamine (HTP) transition. HTP is a key event in which somatic histones are first replaced by testis-specific histone variants, then transition proteins (TNPs) are incorporated into the spermatid nucleus, and finally protamines (PRMs) replace the TNPs to promote chromatin condensation. The polypeptide is Coiled-coil domain-containing glutamate-rich protein 1 (Ccer1) (Rattus norvegicus (Rat)).